The sequence spans 835 residues: Phosphatidylinositol 4-kinase beta (835 aa).

3 disordered regions span residues 1-61 (MGDT…PLDV), 99-139 (SSAS…VRRR), and 267-341 (PSSQ…PVRL). Low complexity predominate over residues 19 to 59 (SPSTSTTSSLSLPSSPSSGPHPLTSSSPSTSEGLPTSSPPL). In terms of domain architecture, PIK helical spans 59–262 (LDVISEGLGE…GTKLRKLILS (204 aa)). Basic and acidic residues-rich tracts occupy residues 125 to 134 (ISEEEVEPIK) and 267 to 276 (PSSQRIRREV). The segment covering 277 to 288 (PQPPPPYPPPLH) has biased composition (pro residues). Over residues 311 to 332 (DATVSISLSSNLKRTASNPKVE) the composition is skewed to polar residues. The 267-residue stretch at 554–820 (EPWQEKVRRI…MVDGSMRSIT (267 aa)) folds into the PI3K/PI4K catalytic domain. The interval 560–566 (VRRIREG) is G-loop. The tract at residues 687-695 (QVKDRHNGN) is catalytic loop. The activation loop stretch occupies residues 706–730 (HIDFGFILSSSPRNLGFETSAFKLT).

The protein belongs to the PI3/PI4-kinase family. Type III PI4K subfamily. Mg(2+) serves as cofactor. The cofactor is Mn(2+). In terms of tissue distribution, expressed in the inner ear otic vesicles.

The protein localises to the endomembrane system. Its subcellular location is the mitochondrion outer membrane. It is found in the rough endoplasmic reticulum membrane. It carries out the reaction a 1,2-diacyl-sn-glycero-3-phospho-(1D-myo-inositol) + ATP = a 1,2-diacyl-sn-glycero-3-phospho-(1D-myo-inositol 4-phosphate) + ADP + H(+). In terms of biological role, phosphorylates phosphatidylinositol (PI) in the first committed step in the production of the second messenger inositol-1,4,5,-trisphosphate (PIP). May play an important role the in inner ear development. This is Phosphatidylinositol 4-kinase beta (pi4kb) from Danio rerio (Zebrafish).